The sequence spans 1009 residues: Putative receptor-like protein 8 (1009 aa).

An N-terminal signal peptide occupies residues 1–22 (MKTNFVILLLLLCVFAISPSQQ). Topologically, residues 23–961 (EEINQHNPGI…EEDDEAPVDM (939 aa)) are extracellular. Asparagine 159 and asparagine 197 each carry an N-linked (GlcNAc...) asparagine glycan. One copy of the LRR 1; degenerate repeat lies at 204–231 (FEEVRSLELSAGLNGFVDNVEGYKSLRK). 25 LRR repeats span residues 232–255 (LKNL…PFIN), 257–281 (ATSL…EIKD), 282–305 (LTNL…LTHL), 306–329 (KKLK…VVCE), 331–354 (KNLW…LGRL), 355–377 (NKLR…TFNR), 379–402 (ESLE…PLAN), 404–427 (TKLK…SEPK), 442–465 (LEKI…ATIV), 466–490 (HELQ…GYAL), 492–514 (NLLR…MGEM), 515–538 (VNIT…FVTG), 540–565 (FSLK…SFTS), 567–587 (EELR…LLSS), 588–612 (NTTL…MSNL), 613–636 (SGLT…LLAI), 638–660 (FLSL…VGGE), 662–681 (GIKL…DTLL), 682–705 (EKVQ…VNTE), 707–728 (IYIL…LCDL), 729–752 (RNIR…LYNL), 819–842 (LDYM…ELGS), 843–866 (LSKL…SFSN), 867–891 (LKDI…LTNL), and 893–916 (SLVV…QFNT). A glycan (N-linked (GlcNAc...) asparagine) is linked at asparagine 267. N-linked (GlcNAc...) asparagine glycans are attached at residues asparagine 390 and asparagine 402. Asparagine 497, asparagine 516, asparagine 526, and asparagine 551 each carry an N-linked (GlcNAc...) asparagine glycan. N-linked (GlcNAc...) asparagine glycans are attached at residues asparagine 588 and asparagine 611. 2 N-linked (GlcNAc...) asparagine glycosylation sites follow: asparagine 716 and asparagine 751. N-linked (GlcNAc...) asparagine glycans are attached at residues asparagine 850, asparagine 890, asparagine 903, and asparagine 934. The interval 934-955 (NRSCDAKKTSDESENGGEEEDD) is disordered. The segment covering 945–955 (ESENGGEEEDD) has biased composition (acidic residues). A helical membrane pass occupies residues 962–982 (LAFYFSSASTYVTTLIGIFIL). The Cytoplasmic portion of the chain corresponds to 983-1009 (MCFDCPLRRAWLRIVDASIASVKSMLP).

The protein belongs to the RLP family.

The protein localises to the cell membrane. The polypeptide is Putative receptor-like protein 8 (Arabidopsis thaliana (Mouse-ear cress)).